Reading from the N-terminus, the 187-residue chain is GTP cyclohydrolase 1 (187 aa).

Zn(2+) contacts are provided by Cys-76, His-79, and Cys-148.

The protein belongs to the GTP cyclohydrolase I family. As to quaternary structure, toroid-shaped homodecamer, composed of two pentamers of five dimers.

The enzyme catalyses GTP + H2O = 7,8-dihydroneopterin 3'-triphosphate + formate + H(+). Its pathway is cofactor biosynthesis; 7,8-dihydroneopterin triphosphate biosynthesis; 7,8-dihydroneopterin triphosphate from GTP: step 1/1. This Streptococcus suis (strain 98HAH33) protein is GTP cyclohydrolase 1.